Here is a 207-residue protein sequence, read N- to C-terminus: Guanylate kinase (207 aa).

Residues 4–184 (GTLYIVSAPS…ALSDLKTIIR (181 aa)) enclose the Guanylate kinase-like domain. 11 to 18 (APSGAGKS) serves as a coordination point for ATP.

Belongs to the guanylate kinase family.

It localises to the cytoplasm. It carries out the reaction GMP + ATP = GDP + ADP. Essential for recycling GMP and indirectly, cGMP. The polypeptide is Guanylate kinase (Yersinia pestis bv. Antiqua (strain Antiqua)).